A 423-amino-acid polypeptide reads, in one-letter code: Serine--tRNA ligase (423 aa).

231-233 is a binding site for L-serine; the sequence is TAE. 262–264 provides a ligand contact to ATP; sequence RSE. Glutamate 285 lines the L-serine pocket. 349-352 is a binding site for ATP; it reads EISS. Serine 384 is an L-serine binding site.

It belongs to the class-II aminoacyl-tRNA synthetase family. Type-1 seryl-tRNA synthetase subfamily. As to quaternary structure, homodimer. The tRNA molecule binds across the dimer.

It is found in the cytoplasm. It carries out the reaction tRNA(Ser) + L-serine + ATP = L-seryl-tRNA(Ser) + AMP + diphosphate + H(+). It catalyses the reaction tRNA(Sec) + L-serine + ATP = L-seryl-tRNA(Sec) + AMP + diphosphate + H(+). It functions in the pathway aminoacyl-tRNA biosynthesis; selenocysteinyl-tRNA(Sec) biosynthesis; L-seryl-tRNA(Sec) from L-serine and tRNA(Sec): step 1/1. Its function is as follows. Catalyzes the attachment of serine to tRNA(Ser). Is also able to aminoacylate tRNA(Sec) with serine, to form the misacylated tRNA L-seryl-tRNA(Sec), which will be further converted into selenocysteinyl-tRNA(Sec). The chain is Serine--tRNA ligase from Lactococcus lactis subsp. lactis (strain IL1403) (Streptococcus lactis).